The chain runs to 476 residues: Bifunctional protein GlmU (476 aa).

The segment at 1–235 (MTALDIIIMA…ALQVAGVNSP (235 aa)) is pyrophosphorylase. UDP-N-acetyl-alpha-D-glucosamine contacts are provided by residues K23, Q81, 86-87 (GT), 108-110 (SGD), G145, E160, and N233. D110 is a Mg(2+) binding site. N233 is a binding site for Mg(2+). Positions 236–256 (AQLAELERAHQRAQAAALMEQ) are linker. Residues 257–476 (GVRLADPARF…WKRPAKQAKG (220 aa)) are N-acetyltransferase. The UDP-N-acetyl-alpha-D-glucosamine site is built by R351 and K369. Residue H381 is the Proton acceptor of the active site. UDP-N-acetyl-alpha-D-glucosamine-binding residues include Y384 and N395. Residues A398, 404–405 (NY), S423, G441, and R458 contribute to the acetyl-CoA site.

It in the N-terminal section; belongs to the N-acetylglucosamine-1-phosphate uridyltransferase family. This sequence in the C-terminal section; belongs to the transferase hexapeptide repeat family. Homotrimer. Requires Mg(2+) as cofactor.

It is found in the cytoplasm. It carries out the reaction alpha-D-glucosamine 1-phosphate + acetyl-CoA = N-acetyl-alpha-D-glucosamine 1-phosphate + CoA + H(+). The enzyme catalyses N-acetyl-alpha-D-glucosamine 1-phosphate + UTP + H(+) = UDP-N-acetyl-alpha-D-glucosamine + diphosphate. It participates in nucleotide-sugar biosynthesis; UDP-N-acetyl-alpha-D-glucosamine biosynthesis; N-acetyl-alpha-D-glucosamine 1-phosphate from alpha-D-glucosamine 6-phosphate (route II): step 2/2. Its pathway is nucleotide-sugar biosynthesis; UDP-N-acetyl-alpha-D-glucosamine biosynthesis; UDP-N-acetyl-alpha-D-glucosamine from N-acetyl-alpha-D-glucosamine 1-phosphate: step 1/1. The protein operates within bacterial outer membrane biogenesis; LPS lipid A biosynthesis. In terms of biological role, catalyzes the last two sequential reactions in the de novo biosynthetic pathway for UDP-N-acetylglucosamine (UDP-GlcNAc). The C-terminal domain catalyzes the transfer of acetyl group from acetyl coenzyme A to glucosamine-1-phosphate (GlcN-1-P) to produce N-acetylglucosamine-1-phosphate (GlcNAc-1-P), which is converted into UDP-GlcNAc by the transfer of uridine 5-monophosphate (from uridine 5-triphosphate), a reaction catalyzed by the N-terminal domain. This is Bifunctional protein GlmU from Acidovorax ebreus (strain TPSY) (Diaphorobacter sp. (strain TPSY)).